We begin with the raw amino-acid sequence, 316 residues long: Beta-ketoacyl-[acyl-carrier-protein] synthase III (316 aa).

Catalysis depends on residues C112 and H243. The interval 244-248 (QANLR) is ACP-binding. The active site involves N273.

This sequence belongs to the thiolase-like superfamily. FabH family. In terms of assembly, homodimer.

It is found in the cytoplasm. It catalyses the reaction malonyl-[ACP] + acetyl-CoA + H(+) = 3-oxobutanoyl-[ACP] + CO2 + CoA. Its pathway is lipid metabolism; fatty acid biosynthesis. Catalyzes the condensation reaction of fatty acid synthesis by the addition to an acyl acceptor of two carbons from malonyl-ACP. Catalyzes the first condensation reaction which initiates fatty acid synthesis and may therefore play a role in governing the total rate of fatty acid production. Possesses both acetoacetyl-ACP synthase and acetyl transacylase activities. Its substrate specificity determines the biosynthesis of branched-chain and/or straight-chain of fatty acids. This Actinobacillus succinogenes (strain ATCC 55618 / DSM 22257 / CCUG 43843 / 130Z) protein is Beta-ketoacyl-[acyl-carrier-protein] synthase III.